A 481-amino-acid polypeptide reads, in one-letter code: WASH complex subunit 1 (481 aa).

The segment at 1-54 is required for WASH complex assembly; it reads MVRMTQKRYLEGQVYSVPLIQPDLRREEAVHQITDALQYLEMISTDIFTRVSES. Disordered stretches follow at residues 273 to 417 and 429 to 481; these read SVPA…SGGD and RRKG…DWEA. The segment covering 304 to 341 has biased composition (pro residues); it reads APPPPPPPPPPPPEPTHVPVPPPGTSAAPPPPPPPPPM. The segment at 359-481 is VCA; the sequence is KGAPSEVVQP…AADDEDDWEA (123 aa). The region spanning 371–393 is the WH2 domain; that stretch reads GRASLLESIRNAGGIGKANLRNV. Over residues 392–407 the composition is skewed to basic and acidic residues; sequence NVKERKMEKKKQKEQE.

Belongs to the WASH1 family. As to quaternary structure, component of the WASH complex.

Its subcellular location is the early endosome membrane. The protein resides in the recycling endosome membrane. Functionally, acts as a nucleation-promoting factor at the surface of endosomes, where it recruits and activates the Arp2/3 complex to induce actin polymerization, playing a key role in the fission of tubules that serve as transport intermediates during endosome sorting. The chain is WASH complex subunit 1 from Danio rerio (Zebrafish).